Consider the following 501-residue polypeptide: Arabinose import ATP-binding protein AraG (501 aa).

2 consecutive ABC transporter domains span residues 4-239 (LEFN…MVGR) and 252-495 (LGDN…LPDK). Residue 36 to 43 (GENGAGKS) participates in ATP binding.

This sequence belongs to the ABC transporter superfamily. Arabinose importer (TC 3.A.1.2.2) family. In terms of assembly, the complex is composed of two ATP-binding proteins (AraG), two transmembrane proteins (AraH) and a solute-binding protein (AraF).

It localises to the cell inner membrane. The enzyme catalyses L-arabinose(out) + ATP + H2O = L-arabinose(in) + ADP + phosphate + H(+). Its function is as follows. Part of the ABC transporter complex AraFGH involved in arabinose import. Responsible for energy coupling to the transport system. This is Arabinose import ATP-binding protein AraG from Rhizobium etli (strain ATCC 51251 / DSM 11541 / JCM 21823 / NBRC 15573 / CFN 42).